We begin with the raw amino-acid sequence, 556 residues long: Butanoate--CoA ligase AAE1 (556 aa).

The Microbody targeting signal signature appears at 554–556 (SKL).

It belongs to the ATP-dependent AMP-binding enzyme family. Expressed in roots, leaves, stems, flowers and developing seeds.

Its subcellular location is the peroxisome. It carries out the reaction butanoate + ATP + CoA = butanoyl-CoA + AMP + diphosphate. The catalysed reaction is hexanoate + ATP + CoA = hexanoyl-CoA + AMP + diphosphate. It catalyses the reaction pentanoate + ATP + CoA = pentanoyl-CoA + AMP + diphosphate. The enzyme catalyses 4-methylpentanoate + ATP + CoA = 4-methylpentanoyl-CoA + AMP + diphosphate. In terms of biological role, catalyzes the ligation of CoA on butanoate to produce butanoyl-CoA. Can also use hexanoate, pentanoate and 4-methylpentanoate as substrates with a lower efficiency. The protein is Butanoate--CoA ligase AAE1 of Arabidopsis thaliana (Mouse-ear cress).